The sequence spans 277 residues: Phosphatidylglycerol--prolipoprotein diacylglyceryl transferase (277 aa).

Helical transmembrane passes span 16 to 36 (LGPIVIRWYALAYLAGFLFGW), 58 to 78 (FLTWAIVGVLLGGRLGFVLFY), 93 to 113 (IWSGGMSFHGGLTGIVAAILL), and 119 to 139 (GFSPFALGDLVAVAGPVGLFL). A 1,2-diacyl-sn-glycero-3-phospho-(1'-sn-glycerol) is bound at residue Arg-141. The next 3 membrane-spanning stretches (helical) occupy residues 182 to 202 (AALEGLVLFAVLAWLASKPAV), 207 to 227 (GTLSGTFLVGYGIARILGEVF), and 239 to 259 (FGVTMGQILSVPMVLIGLWIL).

This sequence belongs to the Lgt family.

The protein resides in the cell inner membrane. It carries out the reaction L-cysteinyl-[prolipoprotein] + a 1,2-diacyl-sn-glycero-3-phospho-(1'-sn-glycerol) = an S-1,2-diacyl-sn-glyceryl-L-cysteinyl-[prolipoprotein] + sn-glycerol 1-phosphate + H(+). It participates in protein modification; lipoprotein biosynthesis (diacylglyceryl transfer). Catalyzes the transfer of the diacylglyceryl group from phosphatidylglycerol to the sulfhydryl group of the N-terminal cysteine of a prolipoprotein, the first step in the formation of mature lipoproteins. The protein is Phosphatidylglycerol--prolipoprotein diacylglyceryl transferase of Rhodospirillum centenum (strain ATCC 51521 / SW).